Here is an 897-residue protein sequence, read N- to C-terminus: Serine/threonine-protein kinase ATG1 (897 aa).

The region spanning 24–325 (YTAEKEIGKG…FEEFFANKVV (302 aa)) is the Protein kinase domain. Residues 30–38 (IGKGSFATV) and Lys-54 contribute to the ATP site. Ser-34 is subject to Phosphoserine. Thr-129 is modified (phosphothreonine). Catalysis depends on Asp-172, which acts as the Proton acceptor. Residue Thr-226 is modified to Phosphothreonine; by autocatalysis. A phosphoserine mark is found at Ser-304, Ser-365, and Ser-390. An LIR motif is present at residues 429-432 (YVVV). A disordered region spans residues 490-509 (LLRATSSSSGGSDGSRRPSL). A phosphoserine; by PKA mark is found at Ser-508 and Ser-515. 3 positions are modified to phosphoserine: Ser-533, Ser-551, and Ser-552. Thr-590 is subject to Phosphothreonine. 9 positions are modified to phosphoserine: Ser-621, Ser-635, Ser-638, Ser-647, Ser-677, Ser-680, Ser-683, Ser-769, and Ser-783. The interval 880–886 (DSIANRL) is required for Cvt trafficking.

The protein belongs to the protein kinase superfamily. Ser/Thr protein kinase family. APG1/unc-51/ULK1 subfamily. Homodimer. Dimerization requires the presence of ATG13. Forms a ternary complex with ATG13 and ATG17. Also interacts with ATG11. In terms of processing, autophosphorylated at Thr-226 and Ser-390. The phosphorylation state may play a role in the induction of protein degradation upon starvation. Phosphorylation at Thr-226 within the activation loop is required for protein kinase activity whereas phosphorylation at Ser-34 leads to inhibition of kinase activity. Phosphorylation of Ser-508 and Ser-515 by PKA is required to induce autophagy but not for kinase activity.

It is found in the cytoplasm. The protein localises to the preautophagosomal structure membrane. It catalyses the reaction L-seryl-[protein] + ATP = O-phospho-L-seryl-[protein] + ADP + H(+). It carries out the reaction L-threonyl-[protein] + ATP = O-phospho-L-threonyl-[protein] + ADP + H(+). Activated by hypophosphorylated form of ATG13 (present in nitrogen starvation conditions). Also activated by autophopsphorylation of Thr-226 and inhibited by phosphorylation of Ser-34. Functionally, serine/threonine protein kinase involved in the cytoplasm to vacuole transport (Cvt) and found to be essential in autophagy, where it is required for the formation of autophagosomes. Involved in the clearance of protein aggregates which cannot be efficiently cleared by the proteasome. Required for selective autophagic degradation of the nucleus (nucleophagy) as well as for mitophagy which contributes to regulate mitochondrial quantity and quality by eliminating the mitochondria to a basal level to fulfill cellular energy requirements and preventing excess ROS production. Also involved in endoplasmic reticulum-specific autophagic process, in selective removal of ER-associated degradation (ERAD) substrates. Plays a key role in ATG9 and ATG23 cycling through the pre-autophagosomal structure and is necessary to promote ATG18 binding to ATG9 through phosphorylation of ATG9. Catalyzes phosphorylation of ATG4, decreasing the interaction between ATG4 and ATG8 and impairing deconjugation of PE-conjugated forms of ATG8. Finally, ATG1 is also required for the maintenance of cell viability under starvation and for glycogen storage during stationary phase. Plays a role in genome stability through suppression of abnormal mitosis under starvation, and in regulation of filamentous growth. This Saccharomyces cerevisiae (strain YJM789) (Baker's yeast) protein is Serine/threonine-protein kinase ATG1.